A 427-amino-acid polypeptide reads, in one-letter code: MSNNQILFERAQKTIPGGVNSPVRAFRSVGGTPRFVSRAQGPYFWDADGKQYIDYIGSWGPMIVGHVHPEVLSAVQKVLADGFSFGAPTEAEIEIAEEICKLVPSIEQVRMVSSGTEATMSALRLARGFTGRSRIVKFEGCYHGHADSLLVKAGSGLLTFGNPTSAGVPADIAKHTTVLEYNNVAALEEAFGAFGDEIAAVIVEPVAGNMNLVRGTPEFLNALRALCTKHGAVLIFDEVMCGFRVALGGAQQHYGITADLTCLGKVIGGGMPAAAFGGRRDIMAHLAPLGGVYQAGTLSGNPIAVAAGLKTLQLIQAPGFYDALTAQTKRLADGLAAEARAAGVPFAADSIGAMFGLYFAERVPTSFAEVTKSDTERFNRFFHLMLDEGVYFAPSAYEAGFVSSTHDDAVIDATLAAARRAFAALAA.

K265 is modified (N6-(pyridoxal phosphate)lysine).

This sequence belongs to the class-III pyridoxal-phosphate-dependent aminotransferase family. HemL subfamily. Homodimer. Requires pyridoxal 5'-phosphate as cofactor.

It localises to the cytoplasm. It catalyses the reaction (S)-4-amino-5-oxopentanoate = 5-aminolevulinate. It participates in porphyrin-containing compound metabolism; protoporphyrin-IX biosynthesis; 5-aminolevulinate from L-glutamyl-tRNA(Glu): step 2/2. This Burkholderia ambifaria (strain MC40-6) protein is Glutamate-1-semialdehyde 2,1-aminomutase.